The sequence spans 576 residues: Beta-bisabolene synthase (576 aa).

(2E,6E)-farnesyl diphosphate contacts are provided by arginine 286, aspartate 323, aspartate 327, arginine 466, and asparagine 469. Residues aspartate 323 and aspartate 327 each contribute to the Mg(2+) site. Residues 323-327 (DDVYD) carry the DDXXD motif motif. Mg(2+) is bound by residues asparagine 469, threonine 473, and glutamate 477.

This sequence belongs to the terpene synthase family. Tpsb subfamily. Requires Mg(2+) as cofactor. Mn(2+) serves as cofactor.

Functionally, produces almost exclusively beta-bisabolene and only traces of alpha-bisabolol from (2E,6E)-farnesyl diphosphate in fragrance biosynthesis. In Santalum austrocaledonicum (Sandalwood), this protein is Beta-bisabolene synthase.